The following is a 554-amino-acid chain: Glucose-6-phosphate isomerase 2 (554 aa).

E359 (proton donor) is an active-site residue. Catalysis depends on residues H390 and K518.

It belongs to the GPI family.

The protein resides in the cytoplasm. It carries out the reaction alpha-D-glucose 6-phosphate = beta-D-fructose 6-phosphate. Its pathway is carbohydrate biosynthesis; gluconeogenesis. It participates in carbohydrate degradation; glycolysis; D-glyceraldehyde 3-phosphate and glycerone phosphate from D-glucose: step 2/4. Its function is as follows. Catalyzes the reversible isomerization of glucose-6-phosphate to fructose-6-phosphate. This Pseudomonas putida (strain ATCC 47054 / DSM 6125 / CFBP 8728 / NCIMB 11950 / KT2440) protein is Glucose-6-phosphate isomerase 2.